Reading from the N-terminus, the 334-residue chain is Putative transport protein MJ1177 (334 aa).

7 helical membrane passes run 13–33 (VIVG…DVLA), 61–81 (LAIS…LLTF), 138–158 (IIDV…TFYF), 191–211 (SYKN…ILSY), 234–254 (LLPI…FFLI), 259–279 (KAVF…DFVI), and 293–313 (VLVV…GFAI).

It belongs to the autoinducer-2 exporter (AI-2E) (TC 2.A.86) family.

It localises to the cell membrane. In Methanocaldococcus jannaschii (strain ATCC 43067 / DSM 2661 / JAL-1 / JCM 10045 / NBRC 100440) (Methanococcus jannaschii), this protein is Putative transport protein MJ1177.